The chain runs to 502 residues: Alpha-ketoglutarate-dependent dioxygenase FTO (502 aa).

Positions 32–324 (TPKDDEFYQQ…SSTHRVAECS (293 aa)) are fe2OG dioxygenase domain. Substrate-binding residues include Arg96 and Tyr108. Residue Asn202 participates in 2-oxoglutarate binding. The segment at 210–221 (PYLKEEPYFGMG) is loop L1; predicted to block binding of double-stranded DNA or RNA. Position 213 is an N6-acetyllysine (Lys213). Fe cation contacts are provided by His228 and Asp230. 228-231 (HHDE) is a binding site for substrate. 2-oxoglutarate is bound at residue Tyr292. Residue His304 coordinates Fe cation. 2-oxoglutarate contacts are provided by residues 313–315 (RFS), Thr317, and Arg319.

This sequence belongs to the fto family. As to quaternary structure, monomer. May also exist as homodimer. Requires Fe(2+) as cofactor. As to expression, ubiquitous. Highly expressed in teeth and weakly in bone.

Its subcellular location is the nucleus. It is found in the nucleus speckle. The protein resides in the cytoplasm. The enzyme catalyses a 5'-end (N(7)-methyl 5'-triphosphoguanosine)-(N(6),2'-O-dimethyladenosine) in mRNA + 2-oxoglutarate + O2 = a 5'-end (N(7)-methyl 5'-triphosphoguanosine)-(2'-O-methyladenosine) in mRNA + formaldehyde + succinate + CO2. It catalyses the reaction an N(6)-methyladenosine in mRNA + 2-oxoglutarate + O2 = an adenosine in mRNA + formaldehyde + succinate + CO2. The catalysed reaction is N(6)-methyladenosine in U6 snRNA + 2-oxoglutarate + O2 = adenosine in U6 snRNA + formaldehyde + succinate + CO2. It carries out the reaction a 5'-end (N(7)-methyl 5'-triphosphoguanosine)-(N(6),2'-O-dimethyladenosine) in U6 snRNA + 2-oxoglutarate + O2 = a 5'-end (N(7)-methyl 5'-triphosphoguanosine)-(2'-O-methyladenosine) in U6 snRNA + formaldehyde + succinate + CO2. The enzyme catalyses an N(1)-methyladenosine in tRNA + 2-oxoglutarate + O2 = an adenosine in tRNA + formaldehyde + succinate + CO2. With respect to regulation, activated by ascorbate. Inhibited by N-oxalylglycine, fumarate and succinate. RNA demethylase that mediates oxidative demethylation of different RNA species, such as mRNAs, tRNAs and snRNAs, and acts as a regulator of fat mass, adipogenesis and energy homeostasis. Specifically demethylates N(6)-methyladenosine (m6A) RNA, the most prevalent internal modification of messenger RNA (mRNA) in higher eukaryotes. M6A demethylation by FTO affects mRNA expression and stability. Also able to demethylate m6A in U6 small nuclear RNA (snRNA). Mediates demethylation of N(6),2'-O-dimethyladenosine cap (m6A(m)), by demethylating the N(6)-methyladenosine at the second transcribed position of mRNAs and U6 snRNA. Demethylation of m6A(m) in the 5'-cap by FTO affects mRNA stability by promoting susceptibility to decapping. Also acts as a tRNA demethylase by removing N(1)-methyladenine from various tRNAs. Has no activity towards 1-methylguanine. Has no detectable activity towards double-stranded DNA. Also able to repair alkylated DNA and RNA by oxidative demethylation: demethylates single-stranded RNA containing 3-methyluracil, single-stranded DNA containing 3-methylthymine and has low demethylase activity towards single-stranded DNA containing 1-methyladenine or 3-methylcytosine. Ability to repair alkylated DNA and RNA is however unsure in vivo. Involved in the regulation of fat mass, adipogenesis and body weight, thereby contributing to the regulation of body size and body fat accumulation. Involved in the regulation of thermogenesis and the control of adipocyte differentiation into brown or white fat cells. Regulates activity of the dopaminergic midbrain circuitry via its ability to demethylate m6A in mRNAs. This is Alpha-ketoglutarate-dependent dioxygenase FTO from Rattus norvegicus (Rat).